We begin with the raw amino-acid sequence, 276 residues long: MSWLQVIVLSIVQGLTEFLPVSSSGHLAITSQVFFDDDAGASFTAVTQLGTEFAVLIYFAKDIGRIIKSWFLGLRAPEHRDADYRLGWFVIVGTIPIGVFGLLFKDEIRTGARNLWLVATALIVFSVVIAAAEYYGRQVRQVEQLTWRDSVIVGLAQCLALMPGVSRSGATISAGLFLGLKREVAARFGFLLAIPAVLASGLFSLPDAFHPVGEGMSASGPQLIVATVIAFVVGFAAIAWFLKFLVSHSMYWFVGYRVVLGVVVLALLGTGVLAAQ.

The next 8 helical transmembrane spans lie at 1-21 (MSWLQVIVLSIVQGLTEFLPV), 39-59 (AGASFTAVTQLGTEFAVLIYF), 84-104 (YRLGWFVIVGTIPIGVFGLLF), 115-135 (LWLVATALIVFSVVIAAAEYY), 159-179 (LALMPGVSRSGATISAGLFLG), 188-208 (FGFLLAIPAVLASGLFSLPDA), 222-242 (QLIVATVIAFVVGFAAIAWFL), and 253-273 (FVGYRVVLGVVVLALLGTGVL).

Belongs to the UppP family.

It localises to the cell membrane. The catalysed reaction is di-trans,octa-cis-undecaprenyl diphosphate + H2O = di-trans,octa-cis-undecaprenyl phosphate + phosphate + H(+). Its function is as follows. Catalyzes the dephosphorylation of undecaprenyl diphosphate (UPP). Confers resistance to bacitracin. This is Undecaprenyl-diphosphatase from Mycolicibacterium smegmatis (strain ATCC 700084 / mc(2)155) (Mycobacterium smegmatis).